The sequence spans 361 residues: MGNIHIQTKSKEYDVYVGKESLSHLTTIVQNMQPSVSNIMIISDEAVASLHLQTVVDALQIDRKVFSFVVPSGEKEKSFENFYAAHTSALENKLDRNSLIVALGGGMIGDLAGFVAASFMRGIRFVQVPTTLLAHDSAVGGKVAINHPLGKNMIGAFHQPEAVVYHTPFLQSLPEKEWRSGYAEVIKHALIGDVKLYHWLKEDVQTLADLRDEKLIHILTKAIPVKANIVAQDETEKGVRAHLNFGHTLGHALEKELGYGNITHGDGVAVGMLFAIFLSEQVYKVNLAYEEMKQWFLKYGYPKMPSDLSVERLVQLMKQDKKANAGTIHMVLMQEYGVVNVVSIPDETVHIALEAFQKDMF.

NAD(+)-binding positions include 72–77 (SGEKEK), 130–131 (TT), Lys142, and Lys151. The Zn(2+) site is built by Glu184, His247, and His264.

Belongs to the sugar phosphate cyclases superfamily. Dehydroquinate synthase family. It depends on Co(2+) as a cofactor. Requires Zn(2+) as cofactor. NAD(+) serves as cofactor.

Its subcellular location is the cytoplasm. It catalyses the reaction 7-phospho-2-dehydro-3-deoxy-D-arabino-heptonate = 3-dehydroquinate + phosphate. Its pathway is metabolic intermediate biosynthesis; chorismate biosynthesis; chorismate from D-erythrose 4-phosphate and phosphoenolpyruvate: step 2/7. In terms of biological role, catalyzes the conversion of 3-deoxy-D-arabino-heptulosonate 7-phosphate (DAHP) to dehydroquinate (DHQ). In Bacillus cereus (strain ZK / E33L), this protein is 3-dehydroquinate synthase.